A 292-amino-acid chain; its full sequence is 4-hydroxybenzoate octaprenyltransferase (292 aa).

8 helical membrane-spanning segments follow: residues 20-40 (IGILLLLWPTLWGLWLAADGM), 43-63 (PMILVIFILGTILMRSAGCAI), 94-114 (LLIAAGLSLCAFLLILPLNLL), 135-155 (FFAMPQAYLGIAFSFGIPMAF), 160-180 (GTVPPLAWLLVLANLFWVIAY), 209-229 (VAGILLCHIIFLSTLTYAGIL), 234-254 (IWFYGALLVALGLVIVQYGMI), and 266-286 (FLHNNWIGAVIFAGILLDTLF).

It belongs to the UbiA prenyltransferase family. Mg(2+) serves as cofactor.

It is found in the cell inner membrane. It catalyses the reaction all-trans-octaprenyl diphosphate + 4-hydroxybenzoate = 4-hydroxy-3-(all-trans-octaprenyl)benzoate + diphosphate. It participates in cofactor biosynthesis; ubiquinone biosynthesis. Catalyzes the prenylation of para-hydroxybenzoate (PHB) with an all-trans polyprenyl group. Mediates the second step in the final reaction sequence of ubiquinone-8 (UQ-8) biosynthesis, which is the condensation of the polyisoprenoid side chain with PHB, generating the first membrane-bound Q intermediate 3-octaprenyl-4-hydroxybenzoate. The sequence is that of 4-hydroxybenzoate octaprenyltransferase from Nitrosomonas europaea (strain ATCC 19718 / CIP 103999 / KCTC 2705 / NBRC 14298).